The chain runs to 96 residues: Antigen H4 (96 aa).

Positions 1–20 (EFQEEIKEGVEEHKHEDDPE) are disordered. N-linked (GlcNAc...) asparagine glycosylation is present at asparagine 34.

The polypeptide is Antigen H4 (H4) (Toxoplasma gondii).